The primary structure comprises 216 residues: Orotate phosphoribosyltransferase (216 aa).

Residues Arg100, Lys104, His106, and Glu126–Ser134 each bind 5-phospho-alpha-D-ribose 1-diphosphate. Ser130 is a binding site for orotate.

Belongs to the purine/pyrimidine phosphoribosyltransferase family. PyrE subfamily. Homodimer. Interacts with BrxC. The cofactor is Mg(2+).

It carries out the reaction orotidine 5'-phosphate + diphosphate = orotate + 5-phospho-alpha-D-ribose 1-diphosphate. The protein operates within pyrimidine metabolism; UMP biosynthesis via de novo pathway; UMP from orotate: step 1/2. Catalyzes the transfer of a ribosyl phosphate group from 5-phosphoribose 1-diphosphate to orotate, leading to the formation of orotidine monophosphate (OMP). This Bacillus subtilis (strain 168) protein is Orotate phosphoribosyltransferase.